Consider the following 558-residue polypeptide: Cyclomaltodextrinase (558 aa).

Residues asparagine 143, glycine 168, and aspartate 170 each coordinate Ca(2+). 2 residues coordinate substrate: histidine 243 and arginine 323. Aspartate 325 functions as the Nucleophile in the catalytic mechanism. The Proton donor role is filled by glutamate 354. Residues 420–421 (HD), aspartate 465, and arginine 469 contribute to the substrate site.

Belongs to the glycosyl hydrolase 13 family. Monomer. Depending on the pH of the solution, exists as a monomer, a homodimer or as an assembly of six homodimers forming a dodecamer, which is catalytically the most efficient form of the enzyme. It depends on Ca(2+) as a cofactor.

It catalyses the reaction cyclomaltodextrin + H2O = linear maltodextrin. The enzyme catalyses Hydrolysis of pullulan to panose (6-alpha-D-glucosylmaltose).. Hydrolysis of beta-cyclodextrin is inhibited by Cu(2+), Zn(2+) and Ag(+), and activated by Ca(2+), EGTA and EDTA. Activity is increased over twofold in the presence of 5 mM EDTA. Competitively inhibited by acarbose and methyl 6-amino-6-deoxy-alpha-D-glucopyranoside by reducing the rate of the ring opening step of the reaction. Functionally, hydrolyzes alpha-, beta- and gamma-cyclodextrins and the resulting linear maltodextrins, with the highest activity with beta-cyclodextrin (cyclomaltoheptaose). Soluble starch is hydrolyzed slowly, but it is nevertheless preferred over pullulan as a substrate. Is able to hydrolyze amylose and amylopectin, with a very strong preference for amylose, with maltose and glucose as the main products. Maltose and glucose are the main hydrolysis products of cyclomaltodextrins, maltodextrins and starch, whereas panose is the main hydrolysis product of pullulan. Acarbose is partially hydrolyzed to glucose and pseudotrisaccharide. No activity with maltose as substrate. Has transglycosylating activity with high concentrations of maltotriose, maltotetraose and starch. The polypeptide is Cyclomaltodextrinase (Bacillus sp).